Consider the following 384-residue polypeptide: Chaperone protein DnaJ (384 aa).

Positions 6–71 constitute a J domain; sequence DYYEVLGISK…TKRKTYDQFG (66 aa). Residues 141–223 form a CR-type zinc finger; it reads GKKMSIKVNR…CHGTGNTRKV (83 aa). The Zn(2+) site is built by Cys-154, Cys-157, Cys-171, Cys-174, Cys-197, Cys-200, Cys-211, and Cys-214. CXXCXGXG motif repeat units lie at residues 154–161, 171–178, 197–204, and 211–218; these read CEECNGTG, CSTCNGTG, CSACNGTG, and CSKCHGTG.

The protein belongs to the DnaJ family. Homodimer. The cofactor is Zn(2+).

Its subcellular location is the cytoplasm. Functionally, participates actively in the response to hyperosmotic and heat shock by preventing the aggregation of stress-denatured proteins and by disaggregating proteins, also in an autonomous, DnaK-independent fashion. Unfolded proteins bind initially to DnaJ; upon interaction with the DnaJ-bound protein, DnaK hydrolyzes its bound ATP, resulting in the formation of a stable complex. GrpE releases ADP from DnaK; ATP binding to DnaK triggers the release of the substrate protein, thus completing the reaction cycle. Several rounds of ATP-dependent interactions between DnaJ, DnaK and GrpE are required for fully efficient folding. Also involved, together with DnaK and GrpE, in the DNA replication of plasmids through activation of initiation proteins. This Clostridioides difficile (strain 630) (Peptoclostridium difficile) protein is Chaperone protein DnaJ.